The following is a 755-amino-acid chain: Polyribonucleotide nucleotidyltransferase (755 aa).

Mg(2+)-binding residues include D482 and D488. The KH domain occupies 549–608 (PRMVSFYIDKDKISAAIGAKGKNIRSVCERSNAKIEIGDDGKVSVFAMSSAEAEIAKNMM). Positions 618-686 (GAIVDVKVVK…KGGCPKLSRR (69 aa)) constitute an S1 motif domain. The span at 702 to 714 (NEEKKDSSNDRDY) shows a compositional bias: basic and acidic residues. The tract at residues 702 to 755 (NEEKKDSSNDRDYYNSPFNRKSGHRKRPVHSRSSFSNRNNRPKFGNDDSSSSFY) is disordered. A compositionally biased stretch (basic residues) spans 722 to 731 (KSGHRKRPVH).

Belongs to the polyribonucleotide nucleotidyltransferase family. The cofactor is Mg(2+).

It is found in the cytoplasm. It catalyses the reaction RNA(n+1) + phosphate = RNA(n) + a ribonucleoside 5'-diphosphate. Involved in mRNA degradation. Catalyzes the phosphorolysis of single-stranded polyribonucleotides processively in the 3'- to 5'-direction. The polypeptide is Polyribonucleotide nucleotidyltransferase (Wolbachia sp. subsp. Brugia malayi (strain TRS)).